We begin with the raw amino-acid sequence, 398 residues long: Probable aminomethyltransferase (398 aa).

The protein belongs to the GcvT family. In terms of assembly, the glycine cleavage system is composed of four proteins: P, T, L and H.

The catalysed reaction is N(6)-[(R)-S(8)-aminomethyldihydrolipoyl]-L-lysyl-[protein] + (6S)-5,6,7,8-tetrahydrofolate = N(6)-[(R)-dihydrolipoyl]-L-lysyl-[protein] + (6R)-5,10-methylene-5,6,7,8-tetrahydrofolate + NH4(+). The glycine cleavage system catalyzes the degradation of glycine. This chain is Probable aminomethyltransferase, found in Thermococcus kodakarensis (strain ATCC BAA-918 / JCM 12380 / KOD1) (Pyrococcus kodakaraensis (strain KOD1)).